The primary structure comprises 661 residues: 3-hydroxypropionyl-coenzyme A synthetase (661 aa).

The active site involves Asp-526. The residue at position 617 (Lys-617) is an N6-acetyllysine.

This sequence belongs to the ATP-dependent AMP-binding enzyme family. Homotetramer.

It catalyses the reaction 3-hydroxypropanoate + ATP + CoA = 3-hydroxypropanoyl-CoA + AMP + diphosphate. Plays a role in the autotrophic CO(2) fixation pathway. Activates 3-hydroxypropionate to its CoA ester. Can also activate propionate, and to a lesser extent acrylate, acetate and butyrate. The chain is 3-hydroxypropionyl-coenzyme A synthetase from Metallosphaera sedula (strain ATCC 51363 / DSM 5348 / JCM 9185 / NBRC 15509 / TH2).